The chain runs to 1258 residues: Non-secreted LysM effector LysM19 (1258 aa).

The tract at residues 148–168 (VTQSLPNISSHEKRDDHEGNS) is disordered. A compositionally biased stretch (basic and acidic residues) spans 157–168 (SHEKRDDHEGNS). LysM domains lie at 1028 to 1073 (IVYT…SICL) and 1179 to 1227 (RWHV…AYCT).

The protein belongs to the secreted LysM effector family.

Its function is as follows. Non-secreted LysM effector that might be involved in manipulation of host defenses for successful infection. The sequence is that of Non-secreted LysM effector LysM19 from Penicillium expansum (Blue mold rot fungus).